The sequence spans 437 residues: GTPase Obg (437 aa).

In terms of domain architecture, Obg spans 2 to 160 (SMFLDTAKIS…RQLELELKIL (159 aa)). Positions 161–338 (ADVGLVGFPS…LLEATAELLA (178 aa)) constitute an OBG-type G domain. Residues 167–174 (GFPSVGKS), 192–196 (FTTIV), 214–217 (DLPG), 284–287 (NKMD), and 319–321 (SSL) contribute to the GTP site. Residues S174 and T194 each coordinate Mg(2+). One can recognise an OCT domain in the interval 359 to 437 (GFAEAEKDFE…IGKFEFEFVD (79 aa)).

Belongs to the TRAFAC class OBG-HflX-like GTPase superfamily. OBG GTPase family. As to quaternary structure, monomer. The cofactor is Mg(2+).

The protein localises to the cytoplasm. In terms of biological role, an essential GTPase which binds GTP, GDP and possibly (p)ppGpp with moderate affinity, with high nucleotide exchange rates and a fairly low GTP hydrolysis rate. Plays a role in control of the cell cycle, stress response, ribosome biogenesis and in those bacteria that undergo differentiation, in morphogenesis control. The polypeptide is GTPase Obg (Streptococcus pyogenes serotype M18 (strain MGAS8232)).